Consider the following 258-residue polypeptide: MLKVRVIPCLDVKDGRVVKGVQFVDLRDAGDPVESARAYDAAGADELTFLDITASHENRGTILDVVRRTAEQCFMPLTVGGGVRTVEDVRALLQAGADKVSINTAAVHRRAFVGEAAEKFGEQCIVVAIDAKQVSGPGETPRWEIFTHGGRKPTGLDVVEYAREVVDLGAGEILLTSMDRDGTGKGFDTALTRAVADAVQVPVIASGGVGTLDHMVDGIREGGATAVLAASIFHFGTFTVRQAKERLAAAGLPVRMDT.

Catalysis depends on residues aspartate 11 and aspartate 130.

This sequence belongs to the HisA/HisF family. As to quaternary structure, heterodimer of HisH and HisF.

Its subcellular location is the cytoplasm. The catalysed reaction is 5-[(5-phospho-1-deoxy-D-ribulos-1-ylimino)methylamino]-1-(5-phospho-beta-D-ribosyl)imidazole-4-carboxamide + L-glutamine = D-erythro-1-(imidazol-4-yl)glycerol 3-phosphate + 5-amino-1-(5-phospho-beta-D-ribosyl)imidazole-4-carboxamide + L-glutamate + H(+). The protein operates within amino-acid biosynthesis; L-histidine biosynthesis; L-histidine from 5-phospho-alpha-D-ribose 1-diphosphate: step 5/9. IGPS catalyzes the conversion of PRFAR and glutamine to IGP, AICAR and glutamate. The HisF subunit catalyzes the cyclization activity that produces IGP and AICAR from PRFAR using the ammonia provided by the HisH subunit. The polypeptide is Imidazole glycerol phosphate synthase subunit HisF (Azorhizobium caulinodans (strain ATCC 43989 / DSM 5975 / JCM 20966 / LMG 6465 / NBRC 14845 / NCIMB 13405 / ORS 571)).